A 552-amino-acid polypeptide reads, in one-letter code: 4-coumarate--CoA ligase-like 4 (552 aa).

The segment at 182–205 (ISATTPDPARRKDRVTQDDPATLL) is disordered. Basic and acidic residues predominate over residues 189–198 (PARRKDRVTQ). 6 residues coordinate ATP: S207, S208, G209, T210, T211, and K215. Y256 is a binding site for (E)-4-coumaroyl-AMP. K277 lines the CoA pocket. The segment at 279–346 (ELPEMLRSIN…EKYPQVEILQ (68 aa)) is SBD1. Residues G324, Q346, G347, and T351 each contribute to the (E)-4-coumaroyl-AMP site. The ATP site is built by Q346, G347, T351, D432, and R447. An SBD2 region spans residues 347–411 (GYGLTESTAI…IRGPYVMKGY (65 aa)). Positions 449 and 453 each coordinate (E)-4-coumaroyl-AMP. CoA contacts are provided by K455 and G456. K538 lines the ATP pocket.

This sequence belongs to the ATP-dependent AMP-binding enzyme family. Mg(2+) is required as a cofactor.

It catalyses the reaction (E)-4-coumarate + ATP + CoA = (E)-4-coumaroyl-CoA + AMP + diphosphate. The catalysed reaction is (E)-4-coumarate + ATP + H(+) = (E)-4-coumaroyl-AMP + diphosphate. The enzyme catalyses (E)-4-coumaroyl-AMP + CoA = (E)-4-coumaroyl-CoA + AMP + H(+). Functionally, carboxylate--CoA ligase that may use 4-coumarate as substrate. Follows a two-step reaction mechanism, wherein the carboxylate substrate first undergoes adenylation by ATP, followed by a thioesterification in the presence of CoA to yield the final CoA thioester. This chain is 4-coumarate--CoA ligase-like 4 (4CLL4), found in Oryza sativa subsp. japonica (Rice).